Reading from the N-terminus, the 28-residue chain is Beta-bungarotoxin B chain-like (28 aa).

A signal peptide spans Met1 to Ser24.

Heterodimer; disulfide-linked. The A chains have phospholipase A2 activity and the B chains show homology with the basic protease inhibitors. As to expression, expressed by the venom gland.

It localises to the secreted. In terms of biological role, beta-1-bungarotoxin is a presynaptic neurotoxin of the venom. The B chain is homologous to venom basic protease inhibitors but has no protease inhibitor activity and blocks voltage-gated potassium channels (Kv). The protein is Beta-bungarotoxin B chain-like of Bungarus multicinctus (Many-banded krait).